A 345-amino-acid polypeptide reads, in one-letter code: Uroporphyrinogen decarboxylase (345 aa).

Substrate contacts are provided by residues 27 to 31, aspartate 77, tyrosine 152, serine 207, and histidine 323; that span reads RQAGR.

Belongs to the uroporphyrinogen decarboxylase family. As to quaternary structure, homodimer.

The protein resides in the cytoplasm. It catalyses the reaction uroporphyrinogen III + 4 H(+) = coproporphyrinogen III + 4 CO2. It participates in porphyrin-containing compound metabolism; protoporphyrin-IX biosynthesis; coproporphyrinogen-III from 5-aminolevulinate: step 4/4. Functionally, catalyzes the decarboxylation of four acetate groups of uroporphyrinogen-III to yield coproporphyrinogen-III. The protein is Uroporphyrinogen decarboxylase of Maricaulis maris (strain MCS10) (Caulobacter maris).